The chain runs to 1211 residues: PH domain-containing protein DDB_G0287875 (1211 aa).

The Ras-associating 1 domain occupies 5–90 (QKKILKVFDQ…YKFFFLNPNG (86 aa)). A compositionally biased stretch (polar residues) spans 103 to 112 (KSQSASTSGS). The interval 103–133 (KSQSASTSGSAPPKKEPPKPQELQQKQHISK) is disordered. Residues 132–223 (SKGKSGWLLR…WAQELQATMN (92 aa)) form the PH domain. Calponin-homology (CH) domains lie at 277–384 (TTLV…VGYF) and 392–502 (FNMR…LSGQ). 2 disordered regions span residues 520–941 (VEPE…TESV) and 973–1110 (TSAT…PKNT). Residues 527 to 572 (SIRDKQLKLMREKKEEEDRLKKEKEEKEKEEKEKLEKESSAAAAAT) are a coiled coil. A compositionally biased stretch (basic and acidic residues) spans 528–565 (IRDKQLKLMREKKEEEDRLKKEKEEKEKEEKEKLEKES). Composition is skewed to low complexity over residues 566 to 596 (SAAA…PLKK), 607 to 646 (PPTV…TLTP), 655 to 668 (KKPA…KPVA), and 676 to 691 (PSSS…TTPS). Basic and acidic residues predominate over residues 703–729 (QLEKEKQDRLEKARLEKEKAEKEEQEF). The stretch at 703–847 (QLEKEKQDRL…ERKHDENDMD (145 aa)) forms a coiled coil. The segment covering 744-753 (LLEQQKQQQE) has biased composition (low complexity). Basic and acidic residues-rich tracts occupy residues 754-778 (GQER…QRQI) and 786-853 (EARI…KLLE). Positions 862–877 (PTITPPQSLHSSQIIR) are enriched in polar residues. The stretch at 880–909 (IEEDDQTNSELEMFQNEYNRLQDEEEHINS) forms a coiled coil. Low complexity-rich tracts occupy residues 914–936 (GSSG…GASS) and 976–1010 (TTSD…TNNN). A compositionally biased stretch (polar residues) spans 1032–1048 (TKEQQSIIDKQTGLVSK). A coiled-coil region spans residues 1048 to 1076 (KQSTNNESNEQQQQQQQQQQLQQQQSSQN). Positions 1049-1083 (QSTNNESNEQQQQQQQQQQLQQQQSSQNSTTSIST) are enriched in low complexity. Residues 1093-1104 (NEEKEKESEPHK) show a composition bias toward basic and acidic residues. The 85-residue stretch at 1112–1196 (GRVVVRICLE…DRFVFKKNDI (85 aa)) folds into the Ras-associating 2 domain.

In Dictyostelium discoideum (Social amoeba), this protein is PH domain-containing protein DDB_G0287875.